The sequence spans 126 residues: Large ribosomal subunit protein bL17 (126 aa).

The protein belongs to the bacterial ribosomal protein bL17 family. As to quaternary structure, part of the 50S ribosomal subunit. Contacts protein L32.

The polypeptide is Large ribosomal subunit protein bL17 (Lysinibacillus sphaericus (strain C3-41)).